A 375-amino-acid chain; its full sequence is Alpha-2,8-sialyltransferase 8B (375 aa).

Over M1 to R6 the chain is Cytoplasmic. Residues S7–A23 form a helical; Signal-anchor for type II membrane protein membrane-spanning segment. The Lumenal segment spans residues D24–T375. 4 N-linked (GlcNAc...) asparagine glycosylation sites follow: N60, N72, N89, and N134. Disulfide bonds link C157–C307 and C171–C371. N162 and N185 together coordinate CMP-N-acetyl-beta-neuraminate. 2 N-linked (GlcNAc...) asparagine glycosylation sites follow: N219 and N234. Positions 294, 295, 296, 316, 329, and 330 each coordinate CMP-N-acetyl-beta-neuraminate. H346 serves as the catalytic Proton donor/acceptor.

This sequence belongs to the glycosyltransferase 29 family. Post-translationally, autopolysialylated. Autopolysialylation is not a prerequisite for the polysialylation acitity, but enhances the polysialylation acitity.

It is found in the golgi apparatus membrane. Its subcellular location is the secreted. The protein resides in the cell membrane. It carries out the reaction [N-acetyl-alpha-D-neuraminosyl-(2-&gt;8)](n) + CMP-N-acetyl-beta-neuraminate = [N-acetyl-alpha-D-neuraminosyl-(2-&gt;8)](n+1) + CMP + H(+). The protein operates within protein modification; protein glycosylation. In terms of biological role, catalyzes the transfer of a sialic acid from a CMP-linked sialic acid donor onto a terminal alpha-2,3-, alpha-2,6-, or alpha-2,8-linked sialic acid of an N-linked glycan acceptor through alpha-2,8-linkages. Therefore, participates in polysialic acid synthesis on various sialylated N-acetyllactosaminyl oligosaccharides (alpha-2,3-, alpha-2,6-, or alpha-2,8-linked sialic acid), including NCAM1, NCAM1 N-glycans, FETUB N-glycans, and to a lesser extent sialylparagloboside (SPG) and AHSG, which does not require the initial addition of an alpha 2,8-sialic acid. However, does not exhibit sialic acid-polymerase activity. Catalyzes polysialic acid synthesis in the hippocampal on NCAM1 and supports neurite outgrowth. ST8SIA2-mediated polysialylation influences on oligodendrocyte differentiation and may promote the integrity of myelin and axons. The polypeptide is Alpha-2,8-sialyltransferase 8B (Pan troglodytes (Chimpanzee)).